Reading from the N-terminus, the 30-residue chain is Cyclotide hyen-C (30 aa).

The segment at residues Gly-1–Asn-30 is a cross-link (cyclopeptide (Gly-Asn)). Disulfide bonds link Cys-5–Cys-20, Cys-9–Cys-22, and Cys-15–Cys-27.

In terms of processing, this is a cyclic peptide. In terms of tissue distribution, detected in stems (at protein level).

Its function is as follows. Probably participates in a plant defense mechanism. Does not display any cytotoxic activity towards K562, HeLa, MCF-7, HUVEC or red blood cells. Does not bind to phospholipd membranes containing 1-palmitoyl 2-oleoyl phosphatidylcholine (POPC) or 1-palmitoyl-2-oleophosphatidylethanolamine (POPE). This is Cyclotide hyen-C from Pigea enneasperma (Spade flower).